A 488-amino-acid chain; its full sequence is Serine hydroxymethyltransferase, mitochondrial (488 aa).

The transit peptide at 1 to 20 (MAVLRQFVKNSYSSIPKRFY) directs the protein to the mitochondrion. An N6-(pyridoxal phosphate)lysine modification is found at K265.

The protein belongs to the SHMT family. Homotetramer. Pyridoxal 5'-phosphate serves as cofactor.

It localises to the mitochondrion. It carries out the reaction (6R)-5,10-methylene-5,6,7,8-tetrahydrofolate + glycine + H2O = (6S)-5,6,7,8-tetrahydrofolate + L-serine. It functions in the pathway one-carbon metabolism; tetrahydrofolate interconversion. Interconversion of serine and glycine. The chain is Serine hydroxymethyltransferase, mitochondrial (shm2) from Schizosaccharomyces pombe (strain 972 / ATCC 24843) (Fission yeast).